The sequence spans 230 residues: Complex I assembly factor TMEM126B, mitochondrial (230 aa).

A run of 4 helical transmembrane segments spans residues 70 to 92 (LNIH…ANLV), 107 to 126 (YASL…KLFV), 139 to 161 (SCVL…ALAF), and 196 to 218 (AMAI…HYNI).

This sequence belongs to the TMEM126 family. As to quaternary structure, part of the mitochondrial complex I assembly/MCIA complex that comprises at least the core subunits TMEM126B, NDUFAF1, ECSIT and ACAD9 and complement subunits such as COA1 and TMEM186. Associates with the intermediate 370 kDa subcomplex of incompletely assembled complex I. Interacts with TMEM70.

It is found in the mitochondrion membrane. As part of the MCIA complex, involved in the assembly of the mitochondrial complex I. Participates in constructing the membrane arm of complex I. The chain is Complex I assembly factor TMEM126B, mitochondrial from Mus musculus (Mouse).